The chain runs to 354 residues: Methionine import ATP-binding protein MetN (354 aa).

Residues 8–250 (LDHIDITFRQ…PKEALTQEFI (243 aa)) form the ABC transporter domain. Residue 42–49 (GYSGAGKS) coordinates ATP.

This sequence belongs to the ABC transporter superfamily. Methionine importer (TC 3.A.1.24) family. The complex is composed of two ATP-binding proteins (MetN), two transmembrane proteins (MetI) and a solute-binding protein (MetQ).

The protein resides in the cell membrane. It carries out the reaction L-methionine(out) + ATP + H2O = L-methionine(in) + ADP + phosphate + H(+). It catalyses the reaction D-methionine(out) + ATP + H2O = D-methionine(in) + ADP + phosphate + H(+). Functionally, part of the ABC transporter complex MetNIQ involved in methionine import. Responsible for energy coupling to the transport system. This chain is Methionine import ATP-binding protein MetN, found in Streptococcus pyogenes serotype M12 (strain MGAS2096).